The chain runs to 802 residues: Potassium channel AKT2/3 (802 aa).

Topologically, residues 1-79 (MDLKYSASHC…PMDSRYRCWE (79 aa)) are cytoplasmic. Residues 80 to 100 (FYMVLLVAYSAWVYPFEVAFL) traverse the membrane as a helical segment. The Extracellular segment spans residues 101-109 (NSSPKRNLC). The chain crosses the membrane as a helical span at residues 110 to 130 (IADNIVDLFFAVDIVLTFFVA). Residues 131–153 (YIDERTQLLVREPKQIAVRYLST) lie on the Cytoplasmic side of the membrane. The chain crosses the membrane as a helical span at residues 154 to 174 (WFLMDVASTIPFDAIGYLITG). At 175–183 (TSTLNITCN) the chain is on the extracellular side. N-linked (GlcNAc...) asparagine glycosylation occurs at Asn179. A helical; Voltage-sensor transmembrane segment spans residues 184–204 (LLGLLRFWRLRRVKHLFTRLE). The Cytoplasmic segment spans residues 205–218 (KDIRYSYFWIRCFR). Residues 219-239 (LLSVTLFLVHCAGCSYYLIAD) form a helical membrane-spanning segment. Residues 240-265 (RYPHQGKTWTDAIPNFTETSLSIRYI) lie on the Extracellular side of the membrane. Asn254 carries N-linked (GlcNAc...) asparagine glycosylation. The pore-forming intramembrane region spans 266–285 (AAIYWSITTMTTVGYGDLHA). The Extracellular portion of the chain corresponds to 286-288 (SNT). Residues 289 to 309 (IEMVFITVYMLFNLGLTAYLI) form a helical membrane-spanning segment. Over 310–802 (GNMTNLVVEG…KLYFVVNKII (493 aa)) the chain is Cytoplasmic. Residue 394–513 (LFKGVSREIL…ATMLKNFLQH (120 aa)) participates in a nucleoside 3',5'-cyclic phosphate binding. ANK repeat units follow at residues 540–569 (NIAS…SPDI), 573–602 (KGKT…NIHI), 606–636 (NGNS…SDPH), 637–666 (IAGD…NVDT), and 670–699 (HGVT…DVVC). The KHA domain occupies 725–802 (RVSIYRGHPL…KLYFVVNKII (78 aa)).

It belongs to the potassium channel family. Plant (TC 1.A.1.4) subfamily. The potassium channel is probably composed of a homo- or heterotetrameric complex of pore-forming subunits. Interacts with the phosphatase PPC2A and the kinase CIPK6. May interact with AKT1, KAT1 and KAT3. Interacts with SLAC1. Dephosphorylated by PP2CA. In terms of tissue distribution, expressed mainly in the phloem tissues throughout the plant but also, at a lower level, in leaf epiderm, mesophyll and guard cells.

Its subcellular location is the endoplasmic reticulum membrane. Functionally, highly selective and weak inward-rectifying potassium channel. Plays a role in both loading and unloading potassium into/from the phloem sap. Seems to control sugar loading into phloem via a voltage-dependent process. Blocked by physiological concentrations of external calcium and by external acidification. May interact with the cytoskeleton or with regulatory proteins. Dephosphorylation by PP2CA not only leads to the inhibition of potassium currents but also to an increase of the voltage-dependence of the channel. Regulated by the CBL4/CIPK6 calcium sensor/protein kinase complex via a kinase interaction-dependent but phosphorylation-independent translocation of the channel to the plasma membrane. This chain is Potassium channel AKT2/3 (AKT2), found in Arabidopsis thaliana (Mouse-ear cress).